The following is a 444-amino-acid chain: Alanyl-tRNA editing protein Aarsd1 (444 aa).

Zn(2+) is bound by residues histidine 109 and histidine 113. A Phosphoserine modification is found at serine 174. Cysteine 209 and histidine 213 together coordinate Zn(2+).

The protein belongs to the class-II aminoacyl-tRNA synthetase family. Alax-L subfamily. Zn(2+) serves as cofactor.

It is found in the cytoplasm. Functions in trans to edit the amino acid moiety from incorrectly charged tRNA(Ala). The sequence is that of Alanyl-tRNA editing protein Aarsd1 (AARSD1) from Bos taurus (Bovine).